The sequence spans 680 residues: Extracellular matrix protein 2 (680 aa).

An N-terminal signal peptide occupies residues 1 to 20 (MKFSSLYCFLLLLIFQTDFG). The VWFC domain occupies 100-157 (GHCLANGMIMYNKAVWSPEPCTTCLCLNGKVLCDETKCHPQMCPQTIIPEGECCPVCS). Acidic residues predominate over residues 189-198 (QLEEDEEEVK). Positions 189–293 (QLEEDEEEVK…RLPIPATPRG (105 aa)) are disordered. The span at 223–238 (QSREGKAQRPEEEGRQ) shows a compositional bias: basic and acidic residues. Positions 249–272 (NEEDDDEEEEDDDDEEEDDDDEDE) are enriched in acidic residues. The Cell attachment site motif lies at 275-277 (RGD). The region spanning 288 to 325 (PATPRGIPSLPSMCSLSYKTISCISADLTQIPPLTAPE) is the LRRNT domain. LRR repeat units follow at residues 349–369 (NLERLDLSKNNITSSGIGPKA), 375–396 (NLMRLNMDGNNLVTIPSELPST), 397–417 (LEELKINENKLQVIDEESLSD), 420–440 (QLVTLELEGNNLSETNVNSLA), 446–466 (SLSYLRLGRNKFRIIPQGLPA), 467–488 (SIEELYLENNQIEEITEISFNH), 491–511 (KINVIGLRYNKIEENRIAPLA), 517–538 (NLESIDLSYNKLYHVPSYLPKS), 539–559 (LVHLVLIGNQIERIPGYVFGH), 563–583 (GLEYLYLSFNKLVDDGIDRVS), 590–611 (SLRELFLDHNELKSIPPGVQEM), 613–634 (ALHFLRLNNNKIRNILPEQICN), and 642–665 (NLQHLHLENNYIKTREIPSYAFSC). Asn-359 carries N-linked (GlcNAc...) asparagine glycosylation. Asn-430 carries N-linked (GlcNAc...) asparagine glycosylation. An N-linked (GlcNAc...) asparagine glycan is attached at Asn-487.

The protein belongs to the small leucine-rich proteoglycan (SLRP) family. SLRP class I subfamily. In terms of assembly, interacts with numerous extracellular matrix proteins. Interacts with MSL1 and RASSF1.

It is found in the secreted. Its subcellular location is the extracellular space. The protein localises to the extracellular matrix. Promotes matrix assembly and cell adhesiveness. This Bos taurus (Bovine) protein is Extracellular matrix protein 2 (ECM2).